The primary structure comprises 459 residues: Exodeoxyribonuclease 7 large subunit (459 aa).

This sequence belongs to the XseA family. In terms of assembly, heterooligomer composed of large and small subunits.

The protein resides in the cytoplasm. The catalysed reaction is Exonucleolytic cleavage in either 5'- to 3'- or 3'- to 5'-direction to yield nucleoside 5'-phosphates.. Functionally, bidirectionally degrades single-stranded DNA into large acid-insoluble oligonucleotides, which are then degraded further into small acid-soluble oligonucleotides. This chain is Exodeoxyribonuclease 7 large subunit, found in Pseudomonas syringae pv. tomato (strain ATCC BAA-871 / DC3000).